The primary structure comprises 478 residues: Transposase for insertion sequence element IS231B (478 aa).

The protein belongs to the transposase 11 family.

Its function is as follows. Involved in the transposition of the insertion sequence. This is Transposase for insertion sequence element IS231B from Bacillus thuringiensis subsp. berliner.